The following is a 469-amino-acid chain: Adenosylhomocysteinase (469 aa).

3 residues coordinate substrate: threonine 63, aspartate 139, and glutamate 164. Threonine 165–threonine 167 serves as a coordination point for NAD(+). Residues lysine 194 and aspartate 198 each coordinate substrate. Residues asparagine 199, glycine 228–glycine 233, glutamate 251, asparagine 300, isoleucine 321–histidine 323, and asparagine 375 each bind NAD(+).

It belongs to the adenosylhomocysteinase family. It depends on NAD(+) as a cofactor.

The protein resides in the cytoplasm. The enzyme catalyses S-adenosyl-L-homocysteine + H2O = L-homocysteine + adenosine. It functions in the pathway amino-acid biosynthesis; L-homocysteine biosynthesis; L-homocysteine from S-adenosyl-L-homocysteine: step 1/1. Functionally, may play a key role in the regulation of the intracellular concentration of adenosylhomocysteine. The sequence is that of Adenosylhomocysteinase from Pseudomonas aeruginosa (strain UCBPP-PA14).